The following is a 253-amino-acid chain: Probable transcriptional regulatory protein RPR_05505 (253 aa).

The protein belongs to the TACO1 family.

The protein localises to the cytoplasm. This chain is Probable transcriptional regulatory protein RPR_05505, found in Rickettsia peacockii (strain Rustic).